Here is a 230-residue protein sequence, read N- to C-terminus: PKHD-type hydroxylase Xfasm12_1709 (230 aa).

Positions 78 to 182 (RTLPPRFNRY…RIASFFWVQS (105 aa)) constitute a Fe2OG dioxygenase domain. Fe cation is bound by residues histidine 96, aspartate 98, and histidine 163. Arginine 173 is a 2-oxoglutarate binding site.

Requires Fe(2+) as cofactor. L-ascorbate is required as a cofactor.

In Xylella fastidiosa (strain M12), this protein is PKHD-type hydroxylase Xfasm12_1709.